A 643-amino-acid polypeptide reads, in one-letter code: Alpha-dioxygenase PIOX (643 aa).

The active-site Proton acceptor is H167. A Ca(2+)-binding site is contributed by D168. Residue H172 coordinates heme b. Positions 220, 222, 224, and 226 each coordinate Ca(2+). Heme b contacts are provided by H392, R489, and R493.

The protein belongs to the peroxidase family. It depends on heme b as a cofactor. Ca(2+) serves as cofactor.

The catalysed reaction is a 1,2-saturated fatty acid + O2 = a (2R)-2-hydroperoxy fatty acid. It catalyses the reaction (9Z,12Z,15Z)-octadecatrienoate + O2 = (R)-2-hydroperoxy-(9Z,12Z,15Z)-octadecatrienoate. It carries out the reaction (9Z,12Z)-octadecadienoate + O2 = (2R,9Z,12Z)-2-hydroperoxyoctadecadienoate. Functionally, alpha-dioxygenase that catalyzes the primary oxygenation step of a variety of 14-20 carbon fatty acids, containing up to three unsaturated bonds, into their corresponding 2R-hydroperoxides. Involved in the production of oxylipins that function in cell signaling, wound healing, and protection from infection. The chain is Alpha-dioxygenase PIOX from Nicotiana tabacum (Common tobacco).